We begin with the raw amino-acid sequence, 343 residues long: tRNA-specific 2-thiouridylase MnmA 2 (343 aa).

ATP contacts are provided by residues 7-14 and Leu33; that span reads GMSGGVDS. Cys91 (nucleophile) is an active-site residue. A disulfide bridge connects residues Cys91 and Cys189. ATP is bound at residue Gly115. The tract at residues 139–141 is interaction with tRNA; it reads KDQ. Residue Cys189 is the Cysteine persulfide intermediate of the active site.

It belongs to the MnmA/TRMU family.

The protein localises to the cytoplasm. It carries out the reaction S-sulfanyl-L-cysteinyl-[protein] + uridine(34) in tRNA + AH2 + ATP = 2-thiouridine(34) in tRNA + L-cysteinyl-[protein] + A + AMP + diphosphate + H(+). In terms of biological role, catalyzes the 2-thiolation of uridine at the wobble position (U34) of tRNA, leading to the formation of s(2)U34. The protein is tRNA-specific 2-thiouridylase MnmA 2 of Fusobacterium nucleatum subsp. nucleatum (strain ATCC 25586 / DSM 15643 / BCRC 10681 / CIP 101130 / JCM 8532 / KCTC 2640 / LMG 13131 / VPI 4355).